The chain runs to 284 residues: MNQTTTFDKLCNYSAACLANWQGKTIVVKYGGNAMISAELKQTVMQNILLLNQYGINVVLVHGGGPEISLGMKLLGKEPQFINGLRVTDQDTIDVVLQMLAGKVNKRLVALLKGKGIGLCGIDGGLIQCEKLEAELDYGLVGNIVQVDITVLQMALAANLIPVIAAVAVDQQGIIYNVNADTVASEIAVALGADKLVLMTDIAGLLADRNDERSLMSRVEVSQVETLIAQGIISDGMIPKVASCTRFINAGGIEAHIIDGRIKHAILLSILSDKQNGTRFYKEK.

Residues 64–65, Arg86, and Asn177 contribute to the substrate site; that span reads GG.

This sequence belongs to the acetylglutamate kinase family. ArgB subfamily.

The protein resides in the cytoplasm. The catalysed reaction is N-acetyl-L-glutamate + ATP = N-acetyl-L-glutamyl 5-phosphate + ADP. The protein operates within amino-acid biosynthesis; L-arginine biosynthesis; N(2)-acetyl-L-ornithine from L-glutamate: step 2/4. Functionally, catalyzes the ATP-dependent phosphorylation of N-acetyl-L-glutamate. This chain is Acetylglutamate kinase, found in Haemophilus ducreyi (strain 35000HP / ATCC 700724).